We begin with the raw amino-acid sequence, 241 residues long: Demethylmenaquinone methyltransferase (241 aa).

S-adenosyl-L-methionine-binding positions include threonine 60, aspartate 81, and 106–107; that span reads DA.

This sequence belongs to the class I-like SAM-binding methyltransferase superfamily. MenG/UbiE family.

The enzyme catalyses a 2-demethylmenaquinol + S-adenosyl-L-methionine = a menaquinol + S-adenosyl-L-homocysteine + H(+). It functions in the pathway quinol/quinone metabolism; menaquinone biosynthesis; menaquinol from 1,4-dihydroxy-2-naphthoate: step 2/2. In terms of biological role, methyltransferase required for the conversion of demethylmenaquinol (DMKH2) to menaquinol (MKH2). This chain is Demethylmenaquinone methyltransferase, found in Staphylococcus aureus (strain MRSA252).